Reading from the N-terminus, the 141-residue chain is Nucleoside triphosphatase NudI (141 aa).

The 141-residue stretch at 1–141 (MRQRTIVCPL…RKTLRLKGLL (141 aa)) folds into the Nudix hydrolase domain. The Nudix box motif lies at 38-59 (GGVESGERIEEALRREIREELG).

This sequence belongs to the Nudix hydrolase family. NudI subfamily. As to quaternary structure, monomer. It depends on Mg(2+) as a cofactor.

It carries out the reaction a ribonucleoside 5'-triphosphate + H2O = a ribonucleoside 5'-phosphate + diphosphate + H(+). The enzyme catalyses a 2'-deoxyribonucleoside 5'-triphosphate + H2O = a 2'-deoxyribonucleoside 5'-phosphate + diphosphate + H(+). The catalysed reaction is dUTP + H2O = dUMP + diphosphate + H(+). It catalyses the reaction dTTP + H2O = dTMP + diphosphate + H(+). It carries out the reaction dCTP + H2O = dCMP + diphosphate + H(+). In terms of biological role, catalyzes the hydrolysis of nucleoside triphosphates, with a preference for pyrimidine deoxynucleoside triphosphates (dUTP, dTTP and dCTP). The polypeptide is Nucleoside triphosphatase NudI (Shigella flexneri serotype 5b (strain 8401)).